A 60-amino-acid chain; its full sequence is Large ribosomal subunit protein uL30 (60 aa).

It belongs to the universal ribosomal protein uL30 family. Part of the 50S ribosomal subunit.

This chain is Large ribosomal subunit protein uL30, found in Saccharopolyspora erythraea (strain ATCC 11635 / DSM 40517 / JCM 4748 / NBRC 13426 / NCIMB 8594 / NRRL 2338).